Here is a 411-residue protein sequence, read N- to C-terminus: Tubulin beta-2 chain (411 aa).

GTP contacts are provided by Glu37, Ser106, Gly110, Thr111, Gly112, Asn172, and Asn194. Residue Glu37 participates in Mg(2+) binding. The disordered stretch occupies residues 392–411 (QYQDATAEPEGXYEEDYDEA). A compositionally biased stretch (acidic residues) spans 402–411 (GXYEEDYDEA).

This sequence belongs to the tubulin family. Dimer of alpha and beta chains. A typical microtubule is a hollow water-filled tube with an outer diameter of 25 nm and an inner diameter of 15 nM. Alpha-beta heterodimers associate head-to-tail to form protofilaments running lengthwise along the microtubule wall with the beta-tubulin subunit facing the microtubule plus end conferring a structural polarity. Microtubules usually have 13 protofilaments but different protofilament numbers can be found in some organisms and specialized cells. Mg(2+) is required as a cofactor.

The protein localises to the cytoplasm. Its subcellular location is the cytoskeleton. Tubulin is the major constituent of microtubules, a cylinder consisting of laterally associated linear protofilaments composed of alpha- and beta-tubulin heterodimers. Microtubules grow by the addition of GTP-tubulin dimers to the microtubule end, where a stabilizing cap forms. Below the cap, tubulin dimers are in GDP-bound state, owing to GTPase activity of alpha-tubulin. The protein is Tubulin beta-2 chain (TUBB2) of Anemia phyllitidis (Fern).